We begin with the raw amino-acid sequence, 260 residues long: Ribonuclease HII (260 aa).

Residues 71-259 enclose the RNase H type-2 domain; the sequence is ELVAGVDEVG…VHDAIVNKKN (189 aa). A divalent metal cation contacts are provided by Asp-77, Glu-78, and Asp-169.

It belongs to the RNase HII family. Requires Mn(2+) as cofactor. Mg(2+) is required as a cofactor.

Its subcellular location is the cytoplasm. The enzyme catalyses Endonucleolytic cleavage to 5'-phosphomonoester.. Its function is as follows. Endonuclease that specifically degrades the RNA of RNA-DNA hybrids. This Leuconostoc citreum (strain KM20) protein is Ribonuclease HII.